A 635-amino-acid chain; its full sequence is Biosynthetic arginine decarboxylase (635 aa).

N6-(pyridoxal phosphate)lysine is present on Lys-100. Residue 282 to 292 (LDIGGGLGVDY) coordinates substrate.

Belongs to the Orn/Lys/Arg decarboxylase class-II family. SpeA subfamily. Mg(2+) is required as a cofactor. It depends on pyridoxal 5'-phosphate as a cofactor.

It carries out the reaction L-arginine + H(+) = agmatine + CO2. It participates in amine and polyamine biosynthesis; agmatine biosynthesis; agmatine from L-arginine: step 1/1. Catalyzes the biosynthesis of agmatine from arginine. The polypeptide is Biosynthetic arginine decarboxylase (Geobacter sp. (strain M21)).